Reading from the N-terminus, the 626-residue chain is Ankyrin repeat domain-containing protein 13B (626 aa).

Residue Met1 is modified to N-acetylmethionine. ANK repeat units lie at residues 47–76 (RGRT…DVGR) and 80–109 (SGWT…YQRV). Positions 442 to 470 (PVPSVRGSPGSETPSPGSDSSSVSSSSST) are disordered. The segment covering 448–470 (GSPGSETPSPGSDSSSVSSSSST) has biased composition (low complexity). In terms of domain architecture, UIM 1 spans 503-522 (EDDDLLRFAIQQSLLEAGSE). Residues 534 to 614 (NSKPGTHPMS…RRRVRQEEEE (81 aa)) are disordered. Pro residues predominate over residues 554–575 (PPTPQRQPMPPAPVPSPRPSPG). 2 UIM domains span residues 585 to 604 (SYDE…QEER) and 610 to 626 (QEEE…LTEQ).

Interacts with EGFR (ubiquitinated); the interaction is direct and may regulate EGFR internalization.

The protein localises to the cell membrane. It localises to the late endosome. The protein resides in the early endosome. Ubiquitin-binding protein that specifically recognizes and binds 'Lys-63'-linked ubiquitin. Does not bind 'Lys-48'-linked ubiquitin. Positively regulates the internalization of ligand-activated EGFR by binding to the Ub moiety of ubiquitinated EGFR at the cell membrane. This chain is Ankyrin repeat domain-containing protein 13B (Ankrd13b), found in Mus musculus (Mouse).